The chain runs to 88 residues: Small ribosomal subunit protein bS16 (88 aa).

It belongs to the bacterial ribosomal protein bS16 family.

This chain is Small ribosomal subunit protein bS16, found in Desulfitobacterium hafniense (strain DSM 10664 / DCB-2).